Consider the following 455-residue polypeptide: GTPase Der (455 aa).

EngA-type G domains follow at residues proline 4 to glutamine 169 and leucine 178 to glutamine 355. GTP-binding positions include glycine 10–serine 17, aspartate 57–leucine 61, asparagine 120–glutamate 123, glycine 184–serine 191, aspartate 233–isoleucine 237, and asparagine 298–aspartate 301. The 86-residue stretch at arginine 356–proline 441 folds into the KH-like domain.

It belongs to the TRAFAC class TrmE-Era-EngA-EngB-Septin-like GTPase superfamily. EngA (Der) GTPase family. As to quaternary structure, associates with the 50S ribosomal subunit.

Functionally, GTPase that plays an essential role in the late steps of ribosome biogenesis. The polypeptide is GTPase Der (Gloeobacter violaceus (strain ATCC 29082 / PCC 7421)).